The primary structure comprises 379 residues: Armadillo repeat-containing X-linked protein 3 (379 aa).

Over 1 to 6 (MGYARK) the chain is Mitochondrial intermembrane. Mitochondrion outer membrane (MOM)-targeting sequence stretches follow at residues 1-6 (MGYARK) and 26-37 (RLTRGRKQNKEK). Residues 7–29 (VGWVTAGLVIGAGACYCIYRLTR) form a helical; Signal-anchor membrane-spanning segment. The Cytoplasmic portion of the chain corresponds to 30-379 (GRKQNKEKMA…AEHMFPKSQE (350 aa)). Residues Ser-61, Ser-67, and Ser-72 each carry the phosphoserine modification. The segment at 89–98 (RARARARARA) is nuclear localization signal. Ser-110 bears the Phosphoserine mark. ARM repeat units lie at residues 111–151 (PNSD…NNAA), 153–192 (AFNR…NLSV), and 233–272 (VTNE…NLAE).

Belongs to the eutherian X-chromosome-specific Armcx family. In terms of assembly, interacts (via ARM domain) with MIRO1, MIRO2 and TRAK2. The interaction with Miro is calcium-dependent. Interacts with SOX10.

Its subcellular location is the mitochondrion outer membrane. The protein resides in the cytoplasm. It is found in the nucleus. Regulates mitochondrial aggregation and transport in axons in living neurons. May link mitochondria to the TRAK2-kinesin motor complex via its interaction with Miro and TRAK2. Mitochondrial distribution and dynamics is regulated through ARMCX3 protein degradation, which is promoted by PCK and negatively regulated by WNT1. Enhances the SOX10-mediated transactivation of the neuronal acetylcholine receptor subunit alpha-3 and beta-4 subunit gene promoters. The sequence is that of Armadillo repeat-containing X-linked protein 3 (ARMCX3) from Pongo abelii (Sumatran orangutan).